We begin with the raw amino-acid sequence, 270 residues long: Undecaprenyl-diphosphatase (270 aa).

The next 8 helical transmembrane spans lie at 1–21, 39–59, 87–107, 114–134, 147–167, 193–213, 223–243, and 250–270; these read MDLFNAAILALIQGITEFLPI, QGLVFDIAANSGSLAAVMLYF, SHLVLQLALATIPVGLVGLAC, VARDPMIIATTSILFGLLLWW, ALSWRQVGIIGIAQAFALIPG, FLMAIPVGILAALLDLKDLFA, FLGVGFCVSGLSAYMVIHGLL, and TMTPFVVYRVVLGVVIFATLG.

Belongs to the UppP family.

The protein localises to the cell inner membrane. It carries out the reaction di-trans,octa-cis-undecaprenyl diphosphate + H2O = di-trans,octa-cis-undecaprenyl phosphate + phosphate + H(+). Its function is as follows. Catalyzes the dephosphorylation of undecaprenyl diphosphate (UPP). Confers resistance to bacitracin. This Magnetococcus marinus (strain ATCC BAA-1437 / JCM 17883 / MC-1) protein is Undecaprenyl-diphosphatase.